Here is a 475-residue protein sequence, read N- to C-terminus: Sulfate adenylyltransferase subunit 1 (475 aa).

Residues 25–239 (KSLLRFLTCG…EVLETVEIQR (215 aa)) form the tr-type G domain. Residues 34-41 (GSVDDGKS) form a G1 region. Position 34 to 41 (34 to 41 (GSVDDGKS)) interacts with GTP. Residues 92 to 96 (GITID) form a G2 region. Positions 113-116 (DTPG) are G3. GTP is bound by residues 113–117 (DTPGH) and 168–171 (NKMD). The G4 stretch occupies residues 168–171 (NKMD). Positions 206-208 (SAL) are G5.

Belongs to the TRAFAC class translation factor GTPase superfamily. Classic translation factor GTPase family. CysN/NodQ subfamily. Heterodimer composed of CysD, the smaller subunit, and CysN.

It catalyses the reaction sulfate + ATP + H(+) = adenosine 5'-phosphosulfate + diphosphate. It participates in sulfur metabolism; hydrogen sulfide biosynthesis; sulfite from sulfate: step 1/3. In terms of biological role, with CysD forms the ATP sulfurylase (ATPS) that catalyzes the adenylation of sulfate producing adenosine 5'-phosphosulfate (APS) and diphosphate, the first enzymatic step in sulfur assimilation pathway. APS synthesis involves the formation of a high-energy phosphoric-sulfuric acid anhydride bond driven by GTP hydrolysis by CysN coupled to ATP hydrolysis by CysD. This Shigella boydii serotype 18 (strain CDC 3083-94 / BS512) protein is Sulfate adenylyltransferase subunit 1.